Reading from the N-terminus, the 494-residue chain is UDP-glucose 6-dehydrogenase (494 aa).

Residues 11–16 (GAGYVG), aspartate 36, arginine 41, and 89–93 (VNTPT) contribute to the NAD(+) site. The disordered stretch occupies residues 88 to 110 (SVNTPTKTYGMGKGRAADLKYIE). Residue lysine 107 is modified to N6-acetyllysine. An allosteric switch region region spans residues 129 to 135 (KSTVPVR). 130–132 (STV) serves as a coordination point for NAD(+). The active-site Proton donor/acceptor is the glutamate 161. Residues 161–165 (EFLAE), 220–224 (KLAAN), arginine 260, and 267–273 (KASVGFG) each bind substrate. Glutamate 165 serves as a coordination point for NAD(+). Catalysis depends on lysine 220, which acts as the Proton donor/acceptor. Cysteine 276 (nucleophile) is an active-site residue. Position 276–279 (276–279 (CFQK)) interacts with NAD(+). An important for formation of active hexamer structure region spans residues 321–325 (SLFNT). 338 to 339 (FK) is a substrate binding site. Arginine 346 contributes to the NAD(+) binding site. Arginine 442 lines the substrate pocket. Residues 466–494 (VSSKRIPYAPSGEIPKFSLQDPPNKKPKV) form a disordered region. Serine 476 carries the phosphoserine modification.

It belongs to the UDP-glucose/GDP-mannose dehydrogenase family. As to quaternary structure, homohexamer.

It carries out the reaction UDP-alpha-D-glucose + 2 NAD(+) + H2O = UDP-alpha-D-glucuronate + 2 NADH + 3 H(+). It participates in nucleotide-sugar biosynthesis; UDP-alpha-D-glucuronate biosynthesis; UDP-alpha-D-glucuronate from UDP-alpha-D-glucose: step 1/1. Its activity is regulated as follows. UDP-alpha-D-xylose (UDX) acts as a feedback inhibitor. It binds at the same site as the substrate, but functions as allosteric inhibitor by triggering a conformation change that disrupts the active hexameric ring structure and gives rise to an inactive, horseshoe-shaped hexamer. Catalyzes the formation of UDP-alpha-D-glucuronate, a constituent of complex glycosaminoglycans. Required for the biosynthesis of chondroitin sulfate and heparan sulfate. Required for embryonic development via its role in the biosynthesis of glycosaminoglycans. Required for proper brain and neuronal development. The sequence is that of UDP-glucose 6-dehydrogenase (UGDH) from Pongo abelii (Sumatran orangutan).